Consider the following 150-residue polypeptide: Large ribosomal subunit protein uL23 (150 aa).

The disordered stretch occupies residues 1-24 (MNKENKTQAVNKAKNTAKVAKKGS). Residues 7–18 (TQAVNKAKNTAK) show a composition bias toward low complexity.

It belongs to the universal ribosomal protein uL23 family.

In Tetrahymena thermophila (strain SB210), this protein is Large ribosomal subunit protein uL23 (RPL23A).